Reading from the N-terminus, the 325-residue chain is tRNA U34 carboxymethyltransferase (325 aa).

Carboxy-S-adenosyl-L-methionine contacts are provided by residues K91, W105, K110, G130, 152–154, 181–182, M197, Y201, and R316; these read DPS and ME.

The protein belongs to the class I-like SAM-binding methyltransferase superfamily. CmoB family. As to quaternary structure, homotetramer.

It catalyses the reaction carboxy-S-adenosyl-L-methionine + 5-hydroxyuridine(34) in tRNA = 5-carboxymethoxyuridine(34) in tRNA + S-adenosyl-L-homocysteine + H(+). Its function is as follows. Catalyzes carboxymethyl transfer from carboxy-S-adenosyl-L-methionine (Cx-SAM) to 5-hydroxyuridine (ho5U) to form 5-carboxymethoxyuridine (cmo5U) at position 34 in tRNAs. The chain is tRNA U34 carboxymethyltransferase from Saccharophagus degradans (strain 2-40 / ATCC 43961 / DSM 17024).